We begin with the raw amino-acid sequence, 209 residues long: Large ribosomal subunit protein uL3 (209 aa).

Residue glutamine 150 is modified to N5-methylglutamine.

The protein belongs to the universal ribosomal protein uL3 family. As to quaternary structure, part of the 50S ribosomal subunit. Forms a cluster with proteins L14 and L19. Methylated by PrmB.

In terms of biological role, one of the primary rRNA binding proteins, it binds directly near the 3'-end of the 23S rRNA, where it nucleates assembly of the 50S subunit. The sequence is that of Large ribosomal subunit protein uL3 from Salmonella paratyphi C (strain RKS4594).